The following is a 187-amino-acid chain: Large ribosomal subunit protein eL18A (187 aa).

Residues S16 and S64 each carry the phosphoserine modification. A phosphothreonine mark is found at T87, T89, and T134. S136 carries the phosphoserine modification. At T138 the chain carries Phosphothreonine.

Belongs to the eukaryotic ribosomal protein eL18 family. In terms of assembly, component of the large ribosomal subunit (LSU). Mature yeast ribosomes consist of a small (40S) and a large (60S) subunit. The 40S small subunit contains 1 molecule of ribosomal RNA (18S rRNA) and at least 33 different proteins. The large 60S subunit contains 3 rRNA molecules (25S, 5.8S and 5S rRNA) and at least 46 different proteins. eL18 interacts with NAP1.

It is found in the cytoplasm. Its function is as follows. Component of the ribosome, a large ribonucleoprotein complex responsible for the synthesis of proteins in the cell. The small ribosomal subunit (SSU) binds messenger RNAs (mRNAs) and translates the encoded message by selecting cognate aminoacyl-transfer RNA (tRNA) molecules. The large subunit (LSU) contains the ribosomal catalytic site termed the peptidyl transferase center (PTC), which catalyzes the formation of peptide bonds, thereby polymerizing the amino acids delivered by tRNAs into a polypeptide chain. The nascent polypeptides leave the ribosome through a tunnel in the LSU and interact with protein factors that function in enzymatic processing, targeting, and the membrane insertion of nascent chains at the exit of the ribosomal tunnel. The protein is Large ribosomal subunit protein eL18A (rpl1801) of Schizosaccharomyces pombe (strain 972 / ATCC 24843) (Fission yeast).